The sequence spans 204 residues: 3-dehydroquinate dehydratase (204 aa).

3-dehydroquinate-binding positions include S9, 30-32, and R57; that span reads ELR. H108 acts as the Proton donor/acceptor in catalysis. K133 functions as the Schiff-base intermediate with substrate in the catalytic mechanism. 3-dehydroquinate is bound by residues R167, T186, and Q190.

This sequence belongs to the type-I 3-dehydroquinase family. In terms of assembly, homodimer.

The enzyme catalyses 3-dehydroquinate = 3-dehydroshikimate + H2O. It participates in metabolic intermediate biosynthesis; chorismate biosynthesis; chorismate from D-erythrose 4-phosphate and phosphoenolpyruvate: step 3/7. In terms of biological role, involved in the third step of the chorismate pathway, which leads to the biosynthesis of aromatic amino acids. Catalyzes the cis-dehydration of 3-dehydroquinate (DHQ) and introduces the first double bond of the aromatic ring to yield 3-dehydroshikimate. The sequence is that of 3-dehydroquinate dehydratase from Metallosphaera sedula (strain ATCC 51363 / DSM 5348 / JCM 9185 / NBRC 15509 / TH2).